A 404-amino-acid chain; its full sequence is Glycosyltransferase GlyB (404 aa).

Residues 1–267 (MNTKSIVFNA…ILLRKDIISR (267 aa)) form a GT8 domain region. Residues 9 to 14 (NADNDY) and 103 to 104 (DS) contribute to the UDP site. Residues Asp-103, Asp-105, and His-228 each coordinate Mn(2+). Residue 228–233 (HYTGVK) participates in UDP binding.

In the N-terminal section; belongs to the glycosyltransferase 8 family.

May be involved in the polymorphic O-glycosylation of the serine-rich repeat protein PsrP. Has equal hydrolytic activity against both UDP-galactose and UDP-glucose; no glycosyltransferase activity has been seen with tested substrates. This chain is Glycosyltransferase GlyB, found in Streptococcus pneumoniae serotype 4 (strain ATCC BAA-334 / TIGR4).